The chain runs to 156 residues: Male-specific protein scotti (156 aa).

The interval 26–48 is disordered; sequence TADAGDDADTLEDGQQQQQQQHQ. Residue asparagine 137 is glycosylated (N-linked (GlcNAc...) asparagine).

It belongs to the male-specific scotti family.

Post-meiotically transcribed gene that has a role in late spermiogenesis; required for actin cone progression during spermatid individualization. The chain is Male-specific protein scotti from Drosophila erecta (Fruit fly).